Here is a 796-residue protein sequence, read N- to C-terminus: Protein translocase subunit SecA 2 (796 aa).

Residues glutamine 84, 102 to 106, and aspartate 496 each bind ATP; that span reads GEGKT.

This sequence belongs to the SecA family. As to quaternary structure, monomer and homodimer. Part of the essential Sec protein translocation apparatus which comprises SecA, SecYEG and auxiliary proteins SecDF. Other proteins may also be involved.

It localises to the cell membrane. It is found in the cytoplasm. The enzyme catalyses ATP + H2O + cellular proteinSide 1 = ADP + phosphate + cellular proteinSide 2.. In terms of biological role, part of the Sec protein translocase complex. Interacts with the SecYEG preprotein conducting channel. Has a central role in coupling the hydrolysis of ATP to the transfer of proteins into and across the cell membrane, serving as an ATP-driven molecular motor driving the stepwise translocation of polypeptide chains across the membrane. In Staphylococcus epidermidis (strain ATCC 35984 / DSM 28319 / BCRC 17069 / CCUG 31568 / BM 3577 / RP62A), this protein is Protein translocase subunit SecA 2.